A 511-amino-acid chain; its full sequence is GMP synthase [glutamine-hydrolyzing] (511 aa).

The 191-residue stretch at 5-195 (IVIVLDFGGQ…LFNICGCKGD (191 aa)) folds into the Glutamine amidotransferase type-1 domain. The active-site Nucleophile is Cys82. Residues His169 and Glu171 contribute to the active site. A GMPS ATP-PPase domain is found at 196–386 (WKTSSFIEER…LGIPEKIVKR (191 aa)). Residue 223–229 (SGGVDSS) coordinates ATP.

As to quaternary structure, homodimer.

The enzyme catalyses XMP + L-glutamine + ATP + H2O = GMP + L-glutamate + AMP + diphosphate + 2 H(+). It participates in purine metabolism; GMP biosynthesis; GMP from XMP (L-Gln route): step 1/1. Functionally, catalyzes the synthesis of GMP from XMP. This Caldicellulosiruptor saccharolyticus (strain ATCC 43494 / DSM 8903 / Tp8T 6331) protein is GMP synthase [glutamine-hydrolyzing].